The chain runs to 436 residues: UPF0597 protein YhaM (436 aa).

The protein belongs to the UPF0597 family.

The polypeptide is UPF0597 protein YhaM (Shigella boydii serotype 18 (strain CDC 3083-94 / BS512)).